Reading from the N-terminus, the 592-residue chain is Aspartate--tRNA(Asp/Asn) ligase (592 aa).

E173 serves as a coordination point for L-aspartate. Positions 197–200 (QLFK) are aspartate. Position 219 (R219) interacts with L-aspartate. ATP contacts are provided by residues 219–221 (RDE) and Q228. Residue H451 participates in L-aspartate binding. Residue E486 coordinates ATP. L-aspartate is bound at residue R493. 538–541 (GLDR) lines the ATP pocket.

Belongs to the class-II aminoacyl-tRNA synthetase family. Type 1 subfamily. As to quaternary structure, homodimer.

Its subcellular location is the cytoplasm. It carries out the reaction tRNA(Asx) + L-aspartate + ATP = L-aspartyl-tRNA(Asx) + AMP + diphosphate. In terms of biological role, aspartyl-tRNA synthetase with relaxed tRNA specificity since it is able to aspartylate not only its cognate tRNA(Asp) but also tRNA(Asn). Reaction proceeds in two steps: L-aspartate is first activated by ATP to form Asp-AMP and then transferred to the acceptor end of tRNA(Asp/Asn). The protein is Aspartate--tRNA(Asp/Asn) ligase of Alkalilimnicola ehrlichii (strain ATCC BAA-1101 / DSM 17681 / MLHE-1).